We begin with the raw amino-acid sequence, 388 residues long: uncharacterized protein (388 aa).

8 helical membrane passes run 15–37 (VISA…LLVL), 97–119 (GFSK…VVFY), 129–151 (PIWG…TFLL), 158–175 (FIYI…FLSA), 179–196 (MMLA…VLFK), 203–225 (LAFW…YLSQ), 304–326 (IFIV…YIYF), and 347–369 (LLSV…DALL).

The protein localises to the cell membrane. This is an uncharacterized protein from Aquifex aeolicus (strain VF5).